The sequence spans 474 residues: ERO1-like protein alpha (474 aa).

An N-terminal signal peptide occupies residues 1–29; the sequence is MVSGCCRLDMSSYVSVLVLCSLLLWGSNS. Intrachain disulfides connect Cys-40–Cys-53, Cys-42–Cys-51, Cys-90–Cys-398, Cys-99–Cys-104, Cys-99–Cys-138, Cys-104–Cys-109, Cys-215–Cys-248, and Cys-401–Cys-404. FAD contacts are provided by Arg-194, Thr-196, and Trp-207. FAD-binding residues include Ser-259, His-262, Arg-294, and Arg-307. Residues Asn-340 and Asn-391 are each glycosylated (N-linked (GlcNAc...) asparagine). Asn-430 is a glycosylation site (N-linked (GlcNAc...) asparagine).

Belongs to the EROs family. Predominantly monomer. May function both as a monomer and a homodimer. Requires FAD as cofactor. In terms of processing, the Cys-99/Cys-104 and Cys-401/Cys-404 disulfide bonds constitute the redox-active center. The Cys-99/Cys-104 disulfide bond may accept electron from protein disulfide isomerase (PDI) and funnel them to the active site disulfide Cys-401/Cys-404.

Its subcellular location is the endoplasmic reticulum membrane. Its activity is regulated as follows. Enzyme activity is tightly regulated to prevent the accumulation of reactive oxygen species in the endoplasmic reticulum. Reversibly down-regulated by the formation of disulfide bonds between the active site Cys-99 and Cys-138, and between Cys-104 and Cys-109. Glutathione may be required to regulate its activity in the endoplasmic reticulum. In terms of biological role, oxidoreductase involved in disulfide bond formation in the endoplasmic reticulum. Efficiently reoxidizes P4HB/PDI, the enzyme catalyzing protein disulfide formation, in order to allow P4HB to sustain additional rounds of disulfide formation. Following P4HB reoxidation, passes its electrons to molecular oxygen via FAD, leading to the production of reactive oxygen species (ROS) in the cell. Required for the folding of immunoglobulins. The sequence is that of ERO1-like protein alpha from Xenopus tropicalis (Western clawed frog).